A 670-amino-acid chain; its full sequence is Glycine--tRNA ligase beta subunit (670 aa).

Belongs to the class-II aminoacyl-tRNA synthetase family. Tetramer of two alpha and two beta subunits.

It localises to the cytoplasm. It carries out the reaction tRNA(Gly) + glycine + ATP = glycyl-tRNA(Gly) + AMP + diphosphate. The sequence is that of Glycine--tRNA ligase beta subunit from Thermotoga neapolitana (strain ATCC 49049 / DSM 4359 / NBRC 107923 / NS-E).